The chain runs to 836 residues: Neuroligin-2 (836 aa).

The signal sequence occupies residues 1–14 (MWLLALCLVGLAGA). The Extracellular portion of the chain corresponds to 15–678 (QRGGGGPGGG…DSRDYSTELS (664 aa)). Asn-98 and Asn-136 each carry an N-linked (GlcNAc...) asparagine glycan. 3 disulfides stabilise this stretch: Cys-106–Cys-141, Cys-317–Cys-328, and Cys-487–Cys-521. The N-linked (GlcNAc...) asparagine glycan is linked to Asn-522. Residues 623 to 661 (PPYATRWPPRTPGPGTSGTRRPPPPATLPPESDIDLGPR) form a disordered region. The helical transmembrane segment at 679 to 699 (VTVAVGASLLFLNILAFAALY) threads the bilayer. The required for interaction with LHFPL4 stretch occupies residues 679–699 (VTVAVGASLLFLNILAFAALY). Residues 700–836 (YKRDRRQELR…LPHPHSTTRV (137 aa)) are Cytoplasmic-facing. Disordered regions lie at residues 711 to 735 (RRLS…TAGR) and 791 to 836 (LLPS…TTRV). Ser-714 and Ser-719 each carry phosphoserine. Positions 717–728 (GGSGSGVPGGGP) are enriched in gly residues. Residues 796 to 819 (LGPPPPPPPPSLHPFGPFPPPPPT) show a composition bias toward pro residues. Positions 824–836 (NNTLPHPHSTTRV) are enriched in polar residues.

It belongs to the type-B carboxylesterase/lipase family. As to quaternary structure, interacts with neurexins NRXN1, NRXN2 and NRXN3. Interaction with neurexins is mediated by heparan sulfate glycan modification on neurexin. Interacts (via its C-terminus) with DLG4/PSD-95 (via PDZ domain 3). Interacts with PATJ. Interacts with GPHN. Interacts with MDGA1 and MDGA2. Found in a complex with MAGI2 and IGSF9B, where it interacts with MAGI2 (via WW 1, WW 2 and PDZ 2 domains). Identified in a complex of 720 kDa composed of LHFPL4, NLGN2, GABRA1, GABRB2, GABRG2 and GABRB3. Interacts with LHFPL4; leading to mutual regulation of the protein level and synaptic clustering. Interacts with GABRA1. Detected on hippocampus neurons, especially at inhibitory synapses. Detected in retina, in the outer and inner plexiform layer. Detected in pancreas, in islet of Langerhans beta cells (at protein level). Expressed in brain, spinal cord and dorsal root ganglion. Detected in brain, and at lower levels in pancreas islet beta cells.

The protein localises to the cell membrane. Its subcellular location is the postsynaptic cell membrane. It is found in the presynaptic cell membrane. Its function is as follows. Transmembrane scaffolding protein involved in cell-cell interactions via its interactions with neurexin family members. Mediates cell-cell interactions both in neurons and in other types of cells, such as Langerhans beta cells. Plays a role in synapse function and synaptic signal transmission, especially via gamma-aminobutyric acid receptors (GABA(A) receptors). Functions by recruiting and clustering synaptic proteins. Promotes clustering of postsynaptic GABRG2 and GPHN. Promotes clustering of postsynaptic LHFPL4. Modulates signaling by inhibitory synapses, and thereby plays a role in controlling the ratio of signaling by excitatory and inhibitory synapses and information processing. Required for normal signal amplitude from inhibitory synapses, but is not essential for normal signal frequency. May promote the initial formation of synapses, but is not essential for this. In vitro, triggers the de novo formation of presynaptic structures. Mediates cell-cell interactions between Langerhans beta cells and modulates insulin secretion. This chain is Neuroligin-2 (Nlgn2), found in Rattus norvegicus (Rat).